A 201-amino-acid polypeptide reads, in one-letter code: Large ribosomal subunit protein uL18 (201 aa).

It belongs to the universal ribosomal protein uL18 family. As to quaternary structure, part of the 50S ribosomal subunit. Contacts the 5S and 23S rRNAs.

This is one of the proteins that bind and probably mediate the attachment of the 5S RNA into the large ribosomal subunit, where it forms part of the central protuberance. The polypeptide is Large ribosomal subunit protein uL18 (Thermococcus gammatolerans (strain DSM 15229 / JCM 11827 / EJ3)).